A 342-amino-acid chain; its full sequence is Alternative oxidase, mitochondrial (342 aa).

A mitochondrion-targeting transit peptide spans 1–20; that stretch reads MIKTYQYRSILNSRNVGIRF. A helical membrane pass occupies residues 135–155; the sequence is LTRCIFLESVAGVPGMVAAFI. Fe cation-binding residues include glutamate 142, glutamate 181, and histidine 184. A helical transmembrane segment spans residues 200–220; sequence FIIYMGQGVFANLFFLVYLIK. Fe cation contacts are provided by glutamate 232, glutamate 287, and histidine 290. 2 stretches are compositionally biased toward basic and acidic residues: residues 308–321 and 330–342; these read PFAL…KEQQ and PHPE…QMRL. Residues 308–342 are disordered; it reads PFALKVEDVPKEQQPDEYSLKTPHPEGWNREQMRL.

The protein belongs to the alternative oxidase family. As to quaternary structure, homodimer; disulfide-linked. Requires Fe cation as cofactor.

It localises to the mitochondrion inner membrane. Catalyzes cyanide-resistant oxygen consumption. May increase respiration when the cytochrome respiratory pathway is restricted, or in response to low temperatures. The protein is Alternative oxidase, mitochondrial (AOX1) of Wickerhamomyces anomalus (Yeast).